We begin with the raw amino-acid sequence, 344 residues long: Phosphoribosylformylglycinamidine cyclo-ligase (344 aa).

The protein belongs to the AIR synthase family.

It localises to the cytoplasm. It carries out the reaction 2-formamido-N(1)-(5-O-phospho-beta-D-ribosyl)acetamidine + ATP = 5-amino-1-(5-phospho-beta-D-ribosyl)imidazole + ADP + phosphate + H(+). The protein operates within purine metabolism; IMP biosynthesis via de novo pathway; 5-amino-1-(5-phospho-D-ribosyl)imidazole from N(2)-formyl-N(1)-(5-phospho-D-ribosyl)glycinamide: step 2/2. The protein is Phosphoribosylformylglycinamidine cyclo-ligase of Laribacter hongkongensis (strain HLHK9).